The sequence spans 434 residues: D-amino acid dehydrogenase (434 aa).

Residue 3-17 (VVILGSGVVGVTSAW) participates in FAD binding.

It belongs to the DadA oxidoreductase family. FAD is required as a cofactor.

The catalysed reaction is a D-alpha-amino acid + A + H2O = a 2-oxocarboxylate + AH2 + NH4(+). Its pathway is amino-acid degradation; D-alanine degradation; NH(3) and pyruvate from D-alanine: step 1/1. Functionally, oxidative deamination of D-amino acids. The polypeptide is D-amino acid dehydrogenase (Yersinia pseudotuberculosis serotype O:1b (strain IP 31758)).